A 266-amino-acid chain; its full sequence is 4-hydroxy-tetrahydrodipicolinate reductase (266 aa).

Residue 10–15 (GPRGRM) participates in NAD(+) binding. Residue Lys38 participates in NADP(+) binding. Residues 99–101 (GTT) and 125–128 (APNF) contribute to the NAD(+) site. The active-site Proton donor/acceptor is His155. His156 contributes to the (S)-2,3,4,5-tetrahydrodipicolinate binding site. Residue Lys159 is the Proton donor of the active site. 165–166 (GT) serves as a coordination point for (S)-2,3,4,5-tetrahydrodipicolinate.

The protein belongs to the DapB family.

It localises to the cytoplasm. It carries out the reaction (S)-2,3,4,5-tetrahydrodipicolinate + NAD(+) + H2O = (2S,4S)-4-hydroxy-2,3,4,5-tetrahydrodipicolinate + NADH + H(+). The catalysed reaction is (S)-2,3,4,5-tetrahydrodipicolinate + NADP(+) + H2O = (2S,4S)-4-hydroxy-2,3,4,5-tetrahydrodipicolinate + NADPH + H(+). The protein operates within amino-acid biosynthesis; L-lysine biosynthesis via DAP pathway; (S)-tetrahydrodipicolinate from L-aspartate: step 4/4. Its function is as follows. Catalyzes the conversion of 4-hydroxy-tetrahydrodipicolinate (HTPA) to tetrahydrodipicolinate. This Bacillus thuringiensis subsp. konkukian (strain 97-27) protein is 4-hydroxy-tetrahydrodipicolinate reductase.